The sequence spans 427 residues: Aspartate aminotransferase, mitochondrial (427 aa).

The transit peptide at 1–26 (MALLKSRLLVGVARCQPCLAAVQGRA) directs the protein to the mitochondrion. Substrate contacts are provided by glycine 62, tryptophan 159, and asparagine 212. The residue at position 276 (lysine 276) is an N6-(pyridoxal phosphate)lysine. A substrate-binding site is contributed by arginine 404.

The protein belongs to the class-I pyridoxal-phosphate-dependent aminotransferase family. As to quaternary structure, homodimer. Pyridoxal 5'-phosphate serves as cofactor.

It localises to the mitochondrion matrix. It catalyses the reaction L-aspartate + 2-oxoglutarate = oxaloacetate + L-glutamate. The enzyme catalyses L-kynurenine + 2-oxoglutarate = kynurenate + L-glutamate + H2O. In terms of biological role, catalyzes the irreversible transamination of the L-tryptophan metabolite L-kynurenine to form kynurenic acid (KA). As a member of the malate-aspartate shuttle, it has a key role in the intracellular NAD(H) redox balance. Is important for metabolite exchange between mitochondria and cytosol, and for amino acid metabolism. The polypeptide is Aspartate aminotransferase, mitochondrial (got2) (Xenopus tropicalis (Western clawed frog)).